A 346-amino-acid polypeptide reads, in one-letter code: Large ribosomal subunit protein uL1c (346 aa).

A chloroplast-targeting transit peptide spans 1–70 (MAACATHSSL…RASNHKFIVS (70 aa)). Tyr129 is subject to Phosphotyrosine. Phosphothreonine is present on Thr177. Ser197 is modified (phosphoserine).

It belongs to the universal ribosomal protein uL1 family. In terms of assembly, part of the 50S ribosomal subunit.

It is found in the plastid. Its subcellular location is the chloroplast. Functionally, this protein binds directly to 23S ribosomal RNA. The protein is Large ribosomal subunit protein uL1c (RPL1) of Arabidopsis thaliana (Mouse-ear cress).